Consider the following 67-residue polypeptide: Large ribosomal subunit protein bL31 (67 aa).

Zn(2+) is bound by residues Cys16, Cys18, Cys36, and Cys39.

It belongs to the bacterial ribosomal protein bL31 family. Type A subfamily. In terms of assembly, part of the 50S ribosomal subunit. Requires Zn(2+) as cofactor.

Binds the 23S rRNA. This chain is Large ribosomal subunit protein bL31, found in Desulforudis audaxviator (strain MP104C).